The primary structure comprises 152 residues: Snaclec agkisacutacin subunit A (152 aa).

Residues 1 to 23 (MGRFIFVSFGLLVVFLSLSGTAA) form the signal peptide. The region spanning 24-152 (DCSSGWSSYE…EQQDPFVCEA (129 aa)) is the C-type lectin domain. Intrachain disulfides connect C25-C36, C53-C150, and C125-C142. Ca(2+) is bound by residues S64, E66, and E70. Residue E151 coordinates Ca(2+).

Belongs to the snaclec family. As to quaternary structure, heterodimer with subunit B of AaACP or agkisacutacin; disulfide-linked. As to expression, expressed by the venom gland.

It is found in the secreted. In terms of biological role, anticoagulant protein which binds to the gamma-carboxyglutamic acid-domain regions of factors IX (F9) and factor X (F10) in the presence of calcium with a 1 to 1 stoichiometry. Also inhibits platelet aggregation by binding to platelet glycoprotein Ibalpha (GP1BA) and functioning as a blocker of von Willebrand factor (VWF). Is devoid of hemorrhagic and lethal activities. Possesses antithrombotic and thrombolytic activities. Also hydrolyzes the Aalpha-chain of fibrinogen (FGA). Does not affect the Bbeta-chain (FGB) and the gamma chain (FGG). This is Snaclec agkisacutacin subunit A from Deinagkistrodon acutus (Hundred-pace snake).